Here is a 1166-residue protein sequence, read N- to C-terminus: Serine-aspartate repeat-containing protein E (1166 aa).

A signal peptide spans 1 to 52 (MINRDNKKAITKKGMISNRLNKFSIRKYTVGTASILVGTTLIFGLGNQEAKA). The YSIRK-G/S signaling motif motif lies at 23-34 (FSIRKYTVGTAS). The ligand binding A region stretch occupies residues 53-606 (AENTSTENAK…GDGTVKPEEK (554 aa)). Residues 54 to 253 (ENTSTENAKQ…HSTKPVATAP (200 aa)) are disordered. Basic and acidic residues predominate over residues 61–75 (AKQDDATTSDNKEVV). Positions 77–90 (ETENNSTTENNSTN) are enriched in low complexity. Positions 92–108 (IKKETNTDSQPEAKKES) are enriched in basic and acidic residues. The span at 118–129 (NNVTATTETKPQ) shows a compositional bias: polar residues. The span at 130-145 (NIEKENVKPSTDKTAT) shows a compositional bias: basic and acidic residues. Over residues 166-178 (TTKPSTSEPSTSE) the composition is skewed to low complexity. The span at 179–212 (IQTKPTTPQESTNIENSQPQPTPSKVDNQVTDAT) shows a compositional bias: polar residues. Over residues 221 to 246 (SKEELKKNPEKLKELVRNDSNTDHST) the composition is skewed to basic and acidic residues. 3 CNA-B domains span residues 607-719 (LYKI…YKEP), 720-829 (KYNL…YKTP), and 830-940 (KYSL…EEDT). Residues 904–1141 (VTNTTEDDKD…TGSENNGSNN (238 aa)) are disordered. Composition is skewed to acidic residues over residues 908-918 (TEDDKDADGGE) and 935-1105 (YFEE…DSDS). An LPXTG sorting signal motif is present at residues 1129–1133 (LPETG). At Thr-1132 the chain carries Pentaglycyl murein peptidoglycan amidated threonine. Positions 1133-1166 (GSENNGSNNATLFGGLFAALGSLLLFGRRKKQNK) are cleaved as a propeptide — removed by sortase.

The protein belongs to the serine-aspartate repeat-containing protein (SDr) family. Interacts with host complement factor H/CFAH (via C-terminus). Interacts with host complement regulator C4BPA.

Its subcellular location is the secreted. The protein localises to the cell wall. Functionally, cell surface-associated calcium-binding protein which plays an important role in adhesion and pathogenesis. Contributes to the resistance to killing by innate immune components in blood and thus attenuates bacterial clearance by interacting with host complement factor H/CFAH and modulating its activity. Also inhibits bacterial opsonization and killing by interacting with host complement regulator C4BPA and thus inhibiting classical complement pathway activation. The polypeptide is Serine-aspartate repeat-containing protein E (sdrE) (Staphylococcus aureus (strain COL)).